The chain runs to 469 residues: 6-phosphofructo-2-kinase/fructose-2,6-bisphosphatase 4 (469 aa).

The tract at residues 1–249 (MASPRELTQN…YYLMNIHVTP (249 aa)) is 6-phosphofructo-2-kinase. Position 46-54 (46-54 (GLPARGKTY)) interacts with ATP. Positions 79 and 103 each coordinate beta-D-fructose 6-phosphate. The active site involves aspartate 129. Beta-D-fructose 6-phosphate-binding residues include threonine 131 and arginine 137. Cysteine 159 is a catalytic residue. 168–173 (NIVQVK) is a binding site for ATP. Positions 173, 194, and 198 each coordinate beta-D-fructose 6-phosphate. Positions 250–469 (RSIYLCRHGE…EALVTVPAHQ (220 aa)) are fructose-2,6-bisphosphatase. Position 256 (arginine 256) interacts with beta-D-fructose 2,6-bisphosphate. Histidine 257 functions as the Tele-phosphohistidine intermediate in the catalytic mechanism. Positions 263, 269, and 306 each coordinate beta-D-fructose 2,6-bisphosphate. The active-site Proton donor/acceptor is the glutamate 326. Beta-D-fructose 2,6-bisphosphate-binding residues include tyrosine 337, arginine 351, lysine 355, tyrosine 366, glutamine 392, and arginine 396. Position 348–351 (348–351 (FALR)) interacts with ATP. ATP is bound by residues 392-396 (QAVMR) and tyrosine 428. A Phosphothreonine; by PKC modification is found at threonine 444.

In the C-terminal section; belongs to the phosphoglycerate mutase family. As to quaternary structure, homodimer.

The catalysed reaction is beta-D-fructose 2,6-bisphosphate + H2O = beta-D-fructose 6-phosphate + phosphate. It carries out the reaction beta-D-fructose 6-phosphate + ATP = beta-D-fructose 2,6-bisphosphate + ADP + H(+). Its activity is regulated as follows. The most important regulatory mechanism of these opposing activities is by phosphorylation and dephosphorylation of the enzyme. Synthesis and degradation of fructose 2,6-bisphosphate. The polypeptide is 6-phosphofructo-2-kinase/fructose-2,6-bisphosphatase 4 (PFKFB4) (Homo sapiens (Human)).